Here is a 478-residue protein sequence, read N- to C-terminus: Protein nucleotidyltransferase YdiU (478 aa).

ATP is bound by residues Gly84, Gly86, Arg87, Lys107, Asp119, Gly120, Arg170, and Arg177. Asp246 acts as the Proton acceptor in catalysis. Residues Asn247 and Asp256 each coordinate Mg(2+). Asp256 contributes to the ATP binding site.

Belongs to the SELO family. Mg(2+) is required as a cofactor. It depends on Mn(2+) as a cofactor.

It catalyses the reaction L-seryl-[protein] + ATP = 3-O-(5'-adenylyl)-L-seryl-[protein] + diphosphate. The catalysed reaction is L-threonyl-[protein] + ATP = 3-O-(5'-adenylyl)-L-threonyl-[protein] + diphosphate. It carries out the reaction L-tyrosyl-[protein] + ATP = O-(5'-adenylyl)-L-tyrosyl-[protein] + diphosphate. The enzyme catalyses L-histidyl-[protein] + UTP = N(tele)-(5'-uridylyl)-L-histidyl-[protein] + diphosphate. It catalyses the reaction L-seryl-[protein] + UTP = O-(5'-uridylyl)-L-seryl-[protein] + diphosphate. The catalysed reaction is L-tyrosyl-[protein] + UTP = O-(5'-uridylyl)-L-tyrosyl-[protein] + diphosphate. Its function is as follows. Nucleotidyltransferase involved in the post-translational modification of proteins. It can catalyze the addition of adenosine monophosphate (AMP) or uridine monophosphate (UMP) to a protein, resulting in modifications known as AMPylation and UMPylation. The chain is Protein nucleotidyltransferase YdiU from Escherichia coli O7:K1 (strain IAI39 / ExPEC).